The chain runs to 879 residues: Fanconi anemia core complex-associated protein 100 (879 aa).

In terms of assembly, belongs to the multisubunit FA complex composed of FANCA, FANCB, FANCC, FANCE, FANCF, FANCG, FANCL/PHF9, FANCM, FAAP24 and FAAP100. Forms a subcomplex with FANCB and FANCL.

The protein localises to the nucleus. Plays a role in Fanconi anemia-associated DNA damage response network. Regulates FANCD2 monoubiquitination and the stability of the FA core complex. Induces chromosomal instability as well as hypersensitivity to DNA cross-linking agents, when repressed. This Mus musculus (Mouse) protein is Fanconi anemia core complex-associated protein 100.